A 501-amino-acid polypeptide reads, in one-letter code: Pyruvate kinase (501 aa).

Position 50 (Arg50) interacts with substrate. Residues Asn52, Ser54, Asp85, and Thr86 each coordinate K(+). Asn52–His55 contacts ATP. Residues Arg92 and Lys178 each contribute to the ATP site. Glu243 is a Mg(2+) binding site. Positions 266, 267, and 299 each coordinate substrate. Position 267 (Asp267) interacts with Mg(2+).

It belongs to the pyruvate kinase family. In terms of assembly, homotetramer. Mg(2+) is required as a cofactor. The cofactor is K(+).

The catalysed reaction is pyruvate + ATP = phosphoenolpyruvate + ADP + H(+). It functions in the pathway carbohydrate degradation; glycolysis; pyruvate from D-glyceraldehyde 3-phosphate: step 5/5. The chain is Pyruvate kinase (PYK1) from Naumovozyma castellii (Yeast).